The following is a 1083-amino-acid chain: MKGTRAIGSVPERSPAGVDLSLTGLPPPVSRRPGSAATTKPIVRSVSVVTGSEQKRKVLEATGPGGSQAINNLRRSNSTTQVSQPRSGSPRPTEPTDFLMLFEGSPSGKKRPASLSTAPSEKGATWNVLDDQPRGFTLPSNARSSSALDSPAGPRRKECTVALAPNFTANNRSNKGAVGNCVTTMVHNRYTPSERAPPLKSSNQTAPSLNNIIKAATCEGSESSGFGKLPKNVSSATHSARNNTGGSTGLPRRKEVTEEEAERFIHQVNQATVTIQRWYRHQVQRRGAGAARLEHLLQAKREEQRQRSGEGTLLDLHQQKEAARRKAREEKARQARRAAIQELQQKRALRAQKASTAERGPPENPRETRVPGMRQPAQELSPTPGGTAHQALKANNTGGGLPAAGPGDRCLPTSDSSPEPQQPPEDRTQDVLAQDAAGDNLEMMAPSRGSAKSRGPLEELLHTLQLLEKEPDVLPRPRTHHRGRYAWASEVTTEDDASSLTADNLEKFGKLSAFPEPPEDGTLLSEAKLQSIMSFLDEMEKSGQDQLDSQQEGWVPEAGPGPLELGSEVSTSVMRLKLEVEEKKQAMLLLQRALAQQRDLTARRVKETEKALSRQLQRQREHYEATIQRHLAFIDQLIEDKKVLSEKCEAVVAELKQEDQRCTERVAQAQAQHELEIKKLKELMSATEKARREKWISEKTKKIKEVTVRGLEPEIQKLIARHKQEVRRLKSLHEAELLQSDERASQRCLRQAEELREQLEREKEALGQQERERARQRFQQHLEQEQWALQQQRQRLYSEVAEERERLGQQAARQRAELEELRQQLEESSSALTRALRAEFEKGREEQERRHQMELNTLKQQLELERQAWEAGRTRKEEAWLLNREQELREEIRKGRDKEIELVIHRLEADMALAKEESEKAAESRIKRLRDKYEAELSELEQSERKLQERCSELKGQLGEAEGENLRLQGLVRQKERALEDAQAVNEQLSSERSNLAQVIRQEFEDRLAASEEETRQAKAELATLQARQQLELEEVHRRVKTALARKEEAVSSLRTQHEAAVKRADHLEELLEQHRRPTPSTK.

Disordered regions lie at residues 1-155 (MKGT…AGPR) and 220-258 (GSESSGFGKLPKNVSSATHSARNNTGGSTGLPRRKEVTE). The interval 1–250 (MKGTRAIGSV…RNNTGGSTGL (250 aa)) is interaction with PLK4. Ser-14 and Ser-35 each carry phosphoserine. Ser-47 is modified (phosphoserine; by MAPKAPK2). The span at 68 to 87 (QAINNLRRSNSTTQVSQPRS) shows a compositional bias: polar residues. Ser-78 bears the Phosphoserine; by MAPKAPK2 and PLK4 mark. A phosphoserine mark is found at Ser-89, Ser-105, Ser-114, Ser-146, and Ser-150. The segment covering 138 to 148 (LPSNARSSSAL) has biased composition (polar residues). Residues 232 to 245 (NVSSATHSARNNTG) are compositionally biased toward polar residues. One can recognise an IQ domain in the interval 269 to 289 (NQATVTIQRWYRHQVQRRGAG). The interval 301 to 429 (REEQRQRSGE…PQQPPEDRTQ (129 aa)) is disordered. 2 stretches are compositionally biased toward basic and acidic residues: residues 317 to 333 (HQQKEAARRKAREEKAR) and 360 to 369 (GPPENPRETR). At Ser-381 the chain carries Phosphoserine. At Thr-383 the chain carries Phosphothreonine. Ser-453, Ser-489, Asp-496, Ser-499, Ser-731, and Ser-798 each carry phosphoserine. Positions 1047-1076 (KEEAVSSLRTQHEAAVKRADHLEELLEQHR) are enriched in basic and acidic residues. Residues 1047 to 1083 (KEEAVSSLRTQHEAAVKRADHLEELLEQHRRPTPSTK) form a disordered region.

Belongs to the CEP131 family. As to quaternary structure, self-associates. Associates with the centriolar satellite BBSome protein complex. Interacts with BBS4; the interaction limits BBS4 availability for association with the BBSome complex, and hence negatively regulates ciliary localization of the BBSome complex. Interacts with MIB1. Interacts with PCM1; the interaction increases in response to ultraviolet light (UV) radiation. Associates with microtubules; association with microtubules is reduced in response to cellular stress, such as UV stimulation, in a process that requires p38 MAP kinase signaling. Interacts with CEP290, DCTN1, PCNT, PCM1 and CEP152. Interacts with 14-3-3 proteins following UV-induced phosphorylation by MAPKAPK2; this inhibits formation of novel centriolar satellites. Interacts with SDCCAG8. Interacts with CCDC61. Interacts with PLK4. Ubiquitinated. Undergoes monoubiquitination catalyzed by the E3 ubiquitin-protein ligase MIB1 in proliferating cells, preventing cilia formation. Monoubiquitination by MIB1 is inhibited in response to cellular stress, such as ultraviolet light (UV) radiation or heat shock, resulting in cilia formation initiation. In terms of processing, MAPKAPK2-dependent phosphorylation at Ser-47 and Ser-78 occurs in response to cellular stress such as exposure to ultraviolet irradiation and promotes binding to 14-3-3 proteins which leads to cytoplasmic sequestration of CEP131 and blocks formation of new centriolar satellites. Phosphorylation at Ser-78 mediated by PLK4 is essential for proper organization and integrity of centriolar satellites but is dispensable for its localization to centrioles and its function in ciliogenesis.

The protein localises to the cytoplasm. The protein resides in the cytoskeleton. It localises to the microtubule organizing center. It is found in the centrosome. Its subcellular location is the centriolar satellite. The protein localises to the centriole. The protein resides in the cilium basal body. It localises to the cytoplasmic vesicle. It is found in the secretory vesicle. Its subcellular location is the acrosome. Functionally, component of centriolar satellites contributing to the building of a complex and dynamic network required to regulate cilia/flagellum formation. In proliferating cells, MIB1-mediated ubiquitination induces its sequestration within centriolar satellites, precluding untimely cilia formation initiation. In contrast, during normal and ultraviolet or heat shock cellular stress-induced ciliogenesis, its non-ubiquitinated form is rapidly displaced from centriolar satellites and recruited to centrosome/basal bodies in a microtubule- and p38 MAPK-dependent manner. Also acts as a negative regulator of BBSome ciliary trafficking. Plays a role in sperm flagellar formation; may be involved in the regulation of intraflagellar transport (IFT) and/or intramanchette (IMT) trafficking, which are important for axoneme extension and/or cargo delivery to the nascent sperm tail. Required for optimal cell proliferation and cell cycle progression; may play a role in the regulation of genome stability in non-ciliogenic cells. Involved in centriole duplication. Required for CEP152, WDR62 and CEP63 centrosomal localization and promotes the centrosomal localization of CDK2. Essential for maintaining proper centriolar satellite integrity. This Homo sapiens (Human) protein is Centrosomal protein of 131 kDa (CEP131).